Reading from the N-terminus, the 73-residue chain is Large ribosomal subunit protein uL24 (73 aa).

Residues 51–65 (DDNPKGGFIHKEKPM) are compositionally biased toward basic and acidic residues. The tract at residues 51–73 (DDNPKGGFIHKEKPMHISNVKKA) is disordered.

It belongs to the universal ribosomal protein uL24 family. Part of the 50S ribosomal subunit.

One of two assembly initiator proteins, it binds directly to the 5'-end of the 23S rRNA, where it nucleates assembly of the 50S subunit. Its function is as follows. One of the proteins that surrounds the polypeptide exit tunnel on the outside of the subunit. This is Large ribosomal subunit protein uL24 from Helicobacter acinonychis (strain Sheeba).